Here is a 284-residue protein sequence, read N- to C-terminus: 2-dehydro-3-deoxyphosphooctonate aldolase (284 aa).

The protein belongs to the KdsA family.

It is found in the cytoplasm. The enzyme catalyses D-arabinose 5-phosphate + phosphoenolpyruvate + H2O = 3-deoxy-alpha-D-manno-2-octulosonate-8-phosphate + phosphate. It participates in carbohydrate biosynthesis; 3-deoxy-D-manno-octulosonate biosynthesis; 3-deoxy-D-manno-octulosonate from D-ribulose 5-phosphate: step 2/3. The protein operates within bacterial outer membrane biogenesis; lipopolysaccharide biosynthesis. The protein is 2-dehydro-3-deoxyphosphooctonate aldolase of Serratia proteamaculans (strain 568).